Reading from the N-terminus, the 398-residue chain is Phosphoglycerate kinase (398 aa).

Residues 23–25, Arg-38, 61–64, Arg-122, and Arg-155 each bind substrate; these read DFN and HMGK. Residues Lys-206, Gly-297, Glu-328, and 354–357 contribute to the ATP site; that span reads GGDS.

Belongs to the phosphoglycerate kinase family. Monomer.

The protein localises to the cytoplasm. The enzyme catalyses (2R)-3-phosphoglycerate + ATP = (2R)-3-phospho-glyceroyl phosphate + ADP. The protein operates within carbohydrate degradation; glycolysis; pyruvate from D-glyceraldehyde 3-phosphate: step 2/5. In Clostridium botulinum (strain 657 / Type Ba4), this protein is Phosphoglycerate kinase.